A 197-amino-acid polypeptide reads, in one-letter code: Phosphoheptose isomerase (197 aa).

The region spanning 34–196 (MVQCLLGGNK…DRTLFPQDEQ (163 aa)) is the SIS domain. 49–51 (NGG) contributes to the substrate binding site. Positions 58 and 62 each coordinate Zn(2+). Residues Glu-62, 91 to 92 (ND), 117 to 119 (STS), Ser-122, and Gln-172 each bind substrate. 2 residues coordinate Zn(2+): Gln-172 and His-180.

The protein belongs to the SIS family. GmhA subfamily. As to quaternary structure, homotetramer. It depends on Zn(2+) as a cofactor.

It is found in the cytoplasm. It carries out the reaction 2 D-sedoheptulose 7-phosphate = D-glycero-alpha-D-manno-heptose 7-phosphate + D-glycero-beta-D-manno-heptose 7-phosphate. The protein operates within carbohydrate biosynthesis; D-glycero-D-manno-heptose 7-phosphate biosynthesis; D-glycero-alpha-D-manno-heptose 7-phosphate and D-glycero-beta-D-manno-heptose 7-phosphate from sedoheptulose 7-phosphate: step 1/1. Functionally, catalyzes the isomerization of sedoheptulose 7-phosphate in D-glycero-D-manno-heptose 7-phosphate. The sequence is that of Phosphoheptose isomerase from Shewanella oneidensis (strain ATCC 700550 / JCM 31522 / CIP 106686 / LMG 19005 / NCIMB 14063 / MR-1).